A 564-amino-acid polypeptide reads, in one-letter code: Dihydroxy-acid dehydratase (564 aa).

Residue Cys-55 coordinates [2Fe-2S] cluster. Asp-87 is a binding site for Mg(2+). Position 128 (Cys-128) interacts with [2Fe-2S] cluster. Residues Asp-129 and Lys-130 each contribute to the Mg(2+) site. Lys-130 is subject to N6-carboxylysine. Cys-200 provides a ligand contact to [2Fe-2S] cluster. Residue Glu-452 coordinates Mg(2+). Catalysis depends on Ser-478, which acts as the Proton acceptor.

This sequence belongs to the IlvD/Edd family. In terms of assembly, homodimer. Requires [2Fe-2S] cluster as cofactor. Mg(2+) serves as cofactor.

It carries out the reaction (2R)-2,3-dihydroxy-3-methylbutanoate = 3-methyl-2-oxobutanoate + H2O. The enzyme catalyses (2R,3R)-2,3-dihydroxy-3-methylpentanoate = (S)-3-methyl-2-oxopentanoate + H2O. It participates in amino-acid biosynthesis; L-isoleucine biosynthesis; L-isoleucine from 2-oxobutanoate: step 3/4. The protein operates within amino-acid biosynthesis; L-valine biosynthesis; L-valine from pyruvate: step 3/4. In terms of biological role, functions in the biosynthesis of branched-chain amino acids. Catalyzes the dehydration of (2R,3R)-2,3-dihydroxy-3-methylpentanoate (2,3-dihydroxy-3-methylvalerate) into 2-oxo-3-methylpentanoate (2-oxo-3-methylvalerate) and of (2R)-2,3-dihydroxy-3-methylbutanoate (2,3-dihydroxyisovalerate) into 2-oxo-3-methylbutanoate (2-oxoisovalerate), the penultimate precursor to L-isoleucine and L-valine, respectively. The chain is Dihydroxy-acid dehydratase from Albidiferax ferrireducens (strain ATCC BAA-621 / DSM 15236 / T118) (Rhodoferax ferrireducens).